We begin with the raw amino-acid sequence, 2234 residues long: MDESVSSLFDLLRKHFPAKEEISRQITVVTSQTEMRMILTEGFKLLSLLIELDSCEVNNCSHNKEDLTVEAILSKDNILTIALPRIVPDGYSLYGNVLILLETFVRVNPSSFEQKYNQDMNKLLSLKNDLQLCGITLVPLVDGRTNYYNKFVDDWVIERFRWLLTQIMKVAKESGESIEELEYQRLVTSLSKLENQSLGFENIIKMPQTGIDYRDKLKARMFANLSNKMKESEINQSLLSLKLAFDEAYNDESHLKKFQKTNKEDLIFKLGQQINLSDEKLSCMSCSSKLFSIVSSITQNRDKLDSHVMSVSNAKLWHHESGIANVNEYLRILSVCNKIKSAKILNTRRNTLLFLDMIVLNFIDDCWKNDPTILFQFKKSGLLVGQLAYFVNDRFFDLLLLKELLSKKLKSSPDWIHRCLCNIRKQEFFDISGVEFWIRQPDYESVEELCCALEPVKPKLQYCRDEDNHENHKLDLADKDNYFTCLSVLSSVCLGLVNSMKTSFTSKMVINEKSPNNFYGEVELKECYCQRFYVSDEITGLLFYQKTGEKSRCYSIGVTMHGSYKYIGSFYCDPKRFFLPIFSQVVLFQMTEEMMSWLPEEPSYKEPVVANLRKLILMLLCNPSKRNQNFLQGMRYFIMAYVNQFHSVELMSKLEVPCKSVSEECVQKLTYNLLVDVLTKGDVNEHMTRKFKFCLNVSYLCHLITKETPDRLTDQIKCFEKFLEPKLKFKSVIINPNLTGDLTEEQEEQLLNSIEKLLGKGLQDINDSSEPGISRELLSMCISAFNRDLLRVNGKLKNDPYKPNFTSTALDLSSNKSVVIPKLDELGNPISKYDYELLVSSCIASMAESFKTKGKYKLDPTSQEFLILKNLYSLMSKSKRDDHMKDSEDSKQNLSSDLENLSEEQVLILEQVKRDVNLALSKMRETKLKEKTEARQSSSGSSLKNQQKRQAELQERLSELWSEFMCMKIITVEVSLHEIKDFDPDLIDHTTLKSMLDKLYNSDLASEFFLEEILNPCPLEFLVKNMTTSSYLEGDLFECFKYTLISAGFDQKLGTYEHKNKTRLGFKYEALKVREEGRMSLRESNSEAIARRLDRSVFSNSALRNLCFYSDESPISYSHVSSDTGKLKFGLSYKEQVGSNRELYVGDLNTKLMTRLIEDFSESVVSNMNYSCLNSEKEFERSVMEMKMSVNLGEMNFSLDHSKWGPYMSPVIFAAFLQGLKLEQGSMCTPVSVEPIITLLSWHIHKVVEVPYNVIHAYMTGMIKRQLGLMSPGESSKTEAFIHRLLVDEREPLSHVMSVLDMGQGILHNTSDLYGLVTEQFINYAMRILYDVSMTSFTSSDDQITMVKLNEDLKDMDNPEVISNWERMINFHTFISSKFNKFVSPKTVIGTFAAEFKSRFFVWGEEVPLLTKFVSAALHNIKCKTPIQLSETIDTISDQCVANGVSVEIVSCISNRTNKLVRYSGFPDNPFLSVENMDVKDWVDGNRGYRLQRNIESHLEVDGCTRFVRQAARKVFRNIKSGKIMEQTLVNLVQEDGDKAFQGFMKSVDVSDDDIKLLQNFRWINLSTHGDMRLVLRTKLMSSRRIIEQEEIPGLIKSIQSKLSKNFVRGAKRILADSINKSAFQSSIASGFIGFCKSMGSKCVRLGGGGFGYIKDIKNKVKHDCLCDICFRWRGCVYCPSSCADVFEFSRPLMWDYFTLVLTNACELGEWVFEDVEIPKDLYFLRNPNLFWLVKPRVTCQLEERLGLSHILQSIRKNYPTLFETHLSPFMSDFMVGKTLGSLTVKFLDLCVALDLANENLGITKHFLKERRHEIYVVKQDESSQSHIRNVKGIESSVELNSMQVCNNFLTQLLMSSFIQPLVLTSSVFKKFNWFAEVLCLKTEEEVCLKQLTDFVLQVKKFNVDRAMHIEDLSAGYISSTINVTSFSLSVPTFLECVDSDFINKEGNEPGDFKDLLSSEFTKDTLTLDFCIQVSHIKRSVKFNVKRTLVYTLAVRTQIEKKIILEAIGTDDQISLIVSELDLFCSGHTGNHFVLDAAPLIYSEPLIAGSLKFDLLSMLRDQELSLTSSEKMPTFNFDFSSQKHHIVNKFAYKLVGPSVYDEPLVLNKGIVYSGERKLTSLGVDVSGERIVQAMGELDSISEQELFLTNLWGYSKETDIKVRIIQDNLKILTDNYFVQLKNSLKTFAEWLNLGNYMLCYSKTLDTIMISDVSGRIKLKGVICRKLIEDEVMEVE.

The interval 26–283 (ITVVTSQTEM…INLSDEKLSC (258 aa)) is endonuclease. Mn(2+) is bound by residues Glu51, Asp89, and Glu102. Lys115 is a catalytic residue. The span at 879–891 (KRDDHMKDSEDSK) shows a compositional bias: basic and acidic residues. Disordered regions lie at residues 879-898 (KRDDHMKDSEDSKQNLSSDL) and 927-949 (KLKEKTEARQSSSGSSLKNQQKR). A compositionally biased stretch (polar residues) spans 935-945 (RQSSSGSSLKN). The 200-residue stretch at 1184-1383 (MEMKMSVNLG…FISSKFNKFV (200 aa)) folds into the RdRp catalytic domain. A Mg(2+)-binding site is contributed by Asp1342.

The protein belongs to the Bunyavirales RNA polymerase family. Homomultimer; the oligomeric structure is essential for the polymerase activity. Interacts with nucleoprotein N. Interacts with protein Z; this interaction inhibits viral transcription and replication, Z partially blocks the product exit tunnel for the releasing nascent RNA product. Requires Mn(2+) as cofactor. The cofactor is Mg(2+).

The protein localises to the virion. The protein resides in the host cytoplasm. The catalysed reaction is RNA(n) + a ribonucleoside 5'-triphosphate = RNA(n+1) + diphosphate. Functionally, RNA-dependent RNA polymerase, which is responsible for the replication and transcription of the viral RNA genome using antigenomic RNA as an intermediate. During transcription, synthesizes subgenomic RNAs and assures their capping by a cap-snatching mechanism, which involves the endonuclease activity cleaving the host capped pre-mRNAs. These short capped RNAs are then used as primers for viral transcription. The 3'-end of subgenomic mRNAs molecules are heterogeneous and not polyadenylated. The replicase function is to direct synthesis of antigenomic and genomic RNA which are encapsidated and non capped. As a consequence of the use of the same enzyme for both transcription and replication, these mechanisms need to be well coordinated. These processes may be regulated by proteins N and Z in a dose-dependent manner. Z protein inhibits the viral polymerase L und thus the viral transcription and RNA synthesis. This chain is RNA-directed RNA polymerase L, found in Bolomys (OLVV).